A 1020-amino-acid polypeptide reads, in one-letter code: LLGL scribble cell polarity complex component 2 (1020 aa).

14 WD repeats span residues Ser36–Leu69, Val76–Phe117, Val132–Ile169, Thr193–Phe227, Leu233–Pro264, Ala282–Glu324, Ile332–Leu364, Thr386–Ser462, Gln506–Val581, Thr590–Ser651, Val710–Gln766, Gly775–Lys827, Leu832–Pro884, and Val898–Thr921. Positions Leu935–Tyr968 are disordered. A compositionally biased stretch (basic and acidic residues) spans Val946–Ser965.

This sequence belongs to the WD repeat L(2)GL family. In terms of processing, phosphorylated.

Its subcellular location is the cytoplasm. The protein resides in the cytoskeleton. Its function is as follows. Essential for hemidesmosome formation and maintenance of the cytoskeleton elements as well as cellular morphology in the basal epidermis during development. Also involved in regulating growth of the basal epidermis. The protein is LLGL scribble cell polarity complex component 2 (llgl2) of Danio rerio (Zebrafish).